A 573-amino-acid chain; its full sequence is Eukaryotic translation initiation factor 3 subunit D (573 aa).

Residues valine 111 to glycine 162 form a disordered region. Residues glycine 136–arginine 156 show a composition bias toward gly residues. The segment at alanine 301–proline 315 is RNA gate. Positions proline 552 to glutamate 573 are disordered. A compositionally biased stretch (acidic residues) spans leucine 556 to glutamate 573.

It belongs to the eIF-3 subunit D family. In terms of assembly, component of the eukaryotic translation initiation factor 3 (eIF-3) complex.

It is found in the cytoplasm. Functionally, mRNA cap-binding component of the eukaryotic translation initiation factor 3 (eIF-3) complex, which is involved in protein synthesis of a specialized repertoire of mRNAs and, together with other initiation factors, stimulates binding of mRNA and methionyl-tRNAi to the 40S ribosome. The eIF-3 complex specifically targets and initiates translation of a subset of mRNAs involved in cell proliferation. In the eIF-3 complex, eif3d specifically recognizes and binds the 7-methylguanosine cap of a subset of mRNAs. In Pyricularia oryzae (strain 70-15 / ATCC MYA-4617 / FGSC 8958) (Rice blast fungus), this protein is Eukaryotic translation initiation factor 3 subunit D.